The following is a 344-amino-acid chain: L-threonine 3-dehydrogenase (344 aa).

Cysteine 42 contacts Zn(2+). Active-site charge relay system residues include threonine 44 and histidine 47. Residues histidine 67, glutamate 68, cysteine 97, cysteine 100, cysteine 103, and cysteine 111 each coordinate Zn(2+). Residues isoleucine 179, aspartate 199, arginine 204, 266 to 268, and 290 to 291 each bind NAD(+); these read LGI and IY.

The protein belongs to the zinc-containing alcohol dehydrogenase family. In terms of assembly, homotetramer. Zn(2+) is required as a cofactor.

It is found in the cytoplasm. The enzyme catalyses L-threonine + NAD(+) = (2S)-2-amino-3-oxobutanoate + NADH + H(+). It participates in amino-acid degradation; L-threonine degradation via oxydo-reductase pathway; glycine from L-threonine: step 1/2. In terms of biological role, catalyzes the NAD(+)-dependent oxidation of L-threonine to 2-amino-3-ketobutyrate. The sequence is that of L-threonine 3-dehydrogenase from Chelativorans sp. (strain BNC1).